We begin with the raw amino-acid sequence, 126 residues long: Aspartate 1-decarboxylase (126 aa).

The active-site Schiff-base intermediate with substrate; via pyruvic acid is serine 25. Serine 25 bears the Pyruvic acid (Ser) mark. Threonine 57 is a substrate binding site. The Proton donor role is filled by tyrosine 58. Residue 73-75 participates in substrate binding; sequence GAA.

The protein belongs to the PanD family. In terms of assembly, heterooctamer of four alpha and four beta subunits. Pyruvate serves as cofactor. Post-translationally, is synthesized initially as an inactive proenzyme, which is activated by self-cleavage at a specific serine bond to produce a beta-subunit with a hydroxyl group at its C-terminus and an alpha-subunit with a pyruvoyl group at its N-terminus.

It localises to the cytoplasm. It catalyses the reaction L-aspartate + H(+) = beta-alanine + CO2. The protein operates within cofactor biosynthesis; (R)-pantothenate biosynthesis; beta-alanine from L-aspartate: step 1/1. In terms of biological role, catalyzes the pyruvoyl-dependent decarboxylation of aspartate to produce beta-alanine. The sequence is that of Aspartate 1-decarboxylase from Salmonella arizonae (strain ATCC BAA-731 / CDC346-86 / RSK2980).